We begin with the raw amino-acid sequence, 353 residues long: 11-beta-hydroxysteroid dehydrogenase B (353 aa).

Residues 10 to 30 (LFVPPASLITLAFSWPALCFP) form a helical; Signal-anchor for type II membrane protein membrane-spanning segment. A Proline-knob motif is present at residues 13–26 (PPASLITLAFSWPA). NADP(+) is bound by residues 54–80 (GASSGIGEQIAYEYALRRACLVLVARR) and Asp105. Ser184 is a binding site for substrate. Tyr197 functions as the Proton acceptor in the catalytic mechanism. Residues 197 to 201 (YAAAK) and Lys201 each bind NADP(+).

The protein belongs to the short-chain dehydrogenases/reductases (SDR) family. As to expression, expressed in seeds (at protein level).

The protein localises to the lipid droplet. The protein resides in the membrane. The catalysed reaction is an 11beta-hydroxysteroid + NADP(+) = an 11-oxosteroid + NADPH + H(+). In terms of biological role, has dehydrogenase activity against 11 beta-hydroxysteroid and 17 beta-hydroxysteroid. May be involved in signal transduction regulated by various sterols. The chain is 11-beta-hydroxysteroid dehydrogenase B from Arachis hypogaea (Peanut).